The chain runs to 39 residues: Photosystem II reaction center protein J (39 aa).

A helical membrane pass occupies residues 7-27 (IPLWIVAVVVGLGVVTVVGLF).

It belongs to the PsbJ family. In terms of assembly, PSII is composed of 1 copy each of membrane proteins PsbA, PsbB, PsbC, PsbD, PsbE, PsbF, PsbH, PsbI, PsbJ, PsbK, PsbL, PsbM, PsbT, PsbX, PsbY, PsbZ, Psb30/Ycf12, peripheral proteins PsbO, CyanoQ (PsbQ), PsbU, PsbV and a large number of cofactors. It forms dimeric complexes.

The protein resides in the cellular thylakoid membrane. In terms of biological role, one of the components of the core complex of photosystem II (PSII). PSII is a light-driven water:plastoquinone oxidoreductase that uses light energy to abstract electrons from H(2)O, generating O(2) and a proton gradient subsequently used for ATP formation. It consists of a core antenna complex that captures photons, and an electron transfer chain that converts photonic excitation into a charge separation. The chain is Photosystem II reaction center protein J from Synechococcus sp. (strain JA-3-3Ab) (Cyanobacteria bacterium Yellowstone A-Prime).